A 263-amino-acid polypeptide reads, in one-letter code: Acetylglutamate kinase (263 aa).

Substrate contacts are provided by residues 48–49 (GG), Arg-70, and Asn-162.

Belongs to the acetylglutamate kinase family. ArgB subfamily.

It is found in the cytoplasm. It carries out the reaction N-acetyl-L-glutamate + ATP = N-acetyl-L-glutamyl 5-phosphate + ADP. It participates in amino-acid biosynthesis; L-arginine biosynthesis; N(2)-acetyl-L-ornithine from L-glutamate: step 2/4. In terms of biological role, catalyzes the ATP-dependent phosphorylation of N-acetyl-L-glutamate. The polypeptide is Acetylglutamate kinase (Vibrio campbellii (strain ATCC BAA-1116)).